Here is a 702-residue protein sequence, read N- to C-terminus: Elongation factor G (702 aa).

Residues 8-290 (ERYRNIGISA…GVVEYLPSPV (283 aa)) enclose the tr-type G domain. GTP-binding positions include 17–24 (AHIDAGKT), 88–92 (DTPGH), and 142–145 (NKMD).

The protein belongs to the TRAFAC class translation factor GTPase superfamily. Classic translation factor GTPase family. EF-G/EF-2 subfamily.

The protein resides in the cytoplasm. Functionally, catalyzes the GTP-dependent ribosomal translocation step during translation elongation. During this step, the ribosome changes from the pre-translocational (PRE) to the post-translocational (POST) state as the newly formed A-site-bound peptidyl-tRNA and P-site-bound deacylated tRNA move to the P and E sites, respectively. Catalyzes the coordinated movement of the two tRNA molecules, the mRNA and conformational changes in the ribosome. The sequence is that of Elongation factor G from Janthinobacterium sp. (strain Marseille) (Minibacterium massiliensis).